A 1500-amino-acid chain; its full sequence is ABC transporter G family member 42 (1500 aa).

The segment at 26-56 is disordered; it reads VDEAFMPQNSGGGGGSRGRRRSGRGGTADDD. Positions 182–455 constitute an ABC transporter 1 domain; that stretch reads LGLVGVRPGR…FESCGFRCPE (274 aa). 215-222 contacts ATP; sequence GPPSSGKT. The ABC transmembrane type-2 1 domain maps to 533 to 746; the sequence is ELLKASFAKE…GYNALAVNEF (214 aa). The next 7 helical transmembrane spans lie at 551-571, 584-604, 639-659, 670-690, 695-715, 724-744, and 783-803; these read FVYI…STVF, GFVY…NGFA, IPFS…TIGF, LLLV…TAGL, IIAQ…GGFL, WWIW…LAVN, and FWIG…LFTL. The segment covering 822–834 has biased composition (basic and acidic residues); that stretch reads TAKEAEGNGDARH. A disordered region spans residues 822-850; sequence TAKEAEGNGDARHTVRNGSTKSNGGNHKE. Residues 837-846 are compositionally biased toward polar residues; the sequence is RNGSTKSNGG. Positions 894–1151 constitute an ABC transporter 2 domain; that stretch reads MSFDDVNYYV…KMIEYFEAIP (258 aa). 939 to 946 is a binding site for ATP; sequence GVSGAGKT. The region spanning 1224-1438 is the ABC transmembrane type-2 2 domain; sequence GQFRACLWKQ…TVYGLIVTQY (215 aa). The next 7 helical transmembrane spans lie at 1245 to 1265, 1277 to 1297, 1331 to 1351, 1358 to 1378, 1388 to 1408, 1416 to 1436, and 1472 to 1492; these read LVRF…FWKI, MVIG…CATV, IPYV…MMSF, FFWF…YGMM, VAAI…GFFI, WWIW…LIVT, and VVAP…AICI.

This sequence belongs to the ABC transporter superfamily. ABCG family. PDR (TC 3.A.1.205) subfamily.

It localises to the membrane. In terms of biological role, may be a general defense protein. The protein is ABC transporter G family member 42 of Oryza sativa subsp. japonica (Rice).